We begin with the raw amino-acid sequence, 268 residues long: Tryptophan synthase alpha chain (268 aa).

Residues Glu49 and Asp60 each act as proton acceptor in the active site.

This sequence belongs to the TrpA family. In terms of assembly, tetramer of two alpha and two beta chains.

It carries out the reaction (1S,2R)-1-C-(indol-3-yl)glycerol 3-phosphate + L-serine = D-glyceraldehyde 3-phosphate + L-tryptophan + H2O. The protein operates within amino-acid biosynthesis; L-tryptophan biosynthesis; L-tryptophan from chorismate: step 5/5. Its function is as follows. The alpha subunit is responsible for the aldol cleavage of indoleglycerol phosphate to indole and glyceraldehyde 3-phosphate. The protein is Tryptophan synthase alpha chain of Aeromonas salmonicida (strain A449).